The following is a 353-amino-acid chain: Methylthioribose-1-phosphate isomerase (353 aa).

Residues 51–53, arginine 94, and glutamine 199 contribute to the substrate site; that span reads RGA. Aspartate 240 acts as the Proton donor in catalysis. 250–251 provides a ligand contact to substrate; that stretch reads NK.

It belongs to the eIF-2B alpha/beta/delta subunits family. MtnA subfamily. As to quaternary structure, homodimer.

The catalysed reaction is 5-(methylsulfanyl)-alpha-D-ribose 1-phosphate = 5-(methylsulfanyl)-D-ribulose 1-phosphate. The protein operates within amino-acid biosynthesis; L-methionine biosynthesis via salvage pathway; L-methionine from S-methyl-5-thio-alpha-D-ribose 1-phosphate: step 1/6. Functionally, catalyzes the interconversion of methylthioribose-1-phosphate (MTR-1-P) into methylthioribulose-1-phosphate (MTRu-1-P). This is Methylthioribose-1-phosphate isomerase from Bacillus velezensis (strain DSM 23117 / BGSC 10A6 / LMG 26770 / FZB42) (Bacillus amyloliquefaciens subsp. plantarum).